Here is a 359-residue protein sequence, read N- to C-terminus: MRQILIAVAIAVAVSILLTPVLIRLFTRQGFGHEIREDGPPSHHKKRGTPSMGGVAIVAGIWASYFGTHLVGVVIDGKGPSASGLLVLGLATALGAVGFLDDLIKIRRARNLGLNKTAKTVGILVAAVLFGVLALQFRNVDGLTPGSAELSYVREIATVTLAPAVFVLFCVVVVSAWSNAVNFTDGLDGLAAGAMAMVCAAYVLITFWQFRNACATSPGVGCYNVRDPLDLAIIAAATAGACIGFLWWNAAPAKIFMGDTGSLALGGIIAGLSVTSRTEMLAVVLGALFVAEVTSVVVQILAFRTTGRRVFRMAPFHHHFELVGWAETTVIIRFWLLTAIACGLGVALFYSEWLTTVGA.

The next 10 helical transmembrane spans lie at 3-23 (QILIAVAIAVAVSILLTPVLI), 55-75 (VAIVAGIWASYFGTHLVGVVI), 84-104 (GLLVLGLATALGAVGFLDDLI), 117-137 (TAKTVGILVAAVLFGVLALQF), 156-176 (IATVTLAPAVFVLFCVVVVSA), 190-210 (LAAGAMAMVCAAYVLITFWQF), 231-251 (LAIIAAATAGACIGFLWWNAA), 255-275 (IFMGDTGSLALGGIIAGLSVT), 283-303 (VVLGALFVAEVTSVVVQILAF), and 330-350 (VIIRFWLLTAIACGLGVALFY).

Belongs to the glycosyltransferase 4 family. MraY subfamily. Requires Mg(2+) as cofactor.

The protein resides in the cell membrane. The enzyme catalyses UDP-N-acetyl-alpha-D-muramoyl-L-alanyl-gamma-D-glutamyl-meso-2,6-diaminopimeloyl-D-alanyl-D-alanine + di-trans,octa-cis-undecaprenyl phosphate = di-trans,octa-cis-undecaprenyl diphospho-N-acetyl-alpha-D-muramoyl-L-alanyl-D-glutamyl-meso-2,6-diaminopimeloyl-D-alanyl-D-alanine + UMP. It participates in cell wall biogenesis; peptidoglycan biosynthesis. Catalyzes the initial step of the lipid cycle reactions in the biosynthesis of the cell wall peptidoglycan: transfers peptidoglycan precursor phospho-MurNAc-pentapeptide from UDP-MurNAc-pentapeptide onto the lipid carrier undecaprenyl phosphate, yielding undecaprenyl-pyrophosphoryl-MurNAc-pentapeptide, known as lipid I. The protein is Phospho-N-acetylmuramoyl-pentapeptide-transferase of Mycolicibacterium vanbaalenii (strain DSM 7251 / JCM 13017 / BCRC 16820 / KCTC 9966 / NRRL B-24157 / PYR-1) (Mycobacterium vanbaalenii).